A 741-amino-acid polypeptide reads, in one-letter code: MQKKRIGKSVVAALAIIAMSAGTVAAWADGAPRTNDFWWPERLDLSPLRQHDVESNPYGKDFDYAQAFNKLDIEAVKKDIRATLTTSQDWWPADYGNYGPFFIRMAWHGAGTYRTYDGRGGAGGAQQRFEPLNSWPDNANLDKARRLLWPIKKKYGQNISWGDLMVLTGNVALESMGFQTFGFGGGREDDWQSDLVYWGAGTKFMSDNRDKNGKLEKPLAATQMGLIYVNPEGPNGNPDPVAAAKDIREAFGRMAMNDEETLALIAGGHTFGKAHGAASPDKCVGAAPAGAGVEAQGLGWANKCGTGKGADTITSGLEGAWSVDPVHFTMQYLDNLLEHDWVLTKSPAGAHQWMPKDAQDIVPDAHDPSKRHPLMMFTTDIALKVDPAYSAIAKRFQAHPEEFKLAFAKAWFKLTHRDLGPKARYLGKDVPKVDLIWQDPLPVAGYQMIGDADIAELKRRILASGVPKSELIKTAWASAASFRATDYRGGANGARIRLAPENAWAVNDPASLSKVLKSLEDIQSGFNRNRTDGKQVSLADLIVLGGSAAVEDAARKAGYDVKVPFSPGRVDATQAQTDVASFAVLEPTSDGFRNYYRKSNERSPAELMVDRASKLDLSVPEMTVLVGGLRALDANAGHSRLGVLTNRPGTLSNDFFVNLLDMSTQWTKSSSADGTYEGRDRKTGALKWTASPVDLVFGSSSELRAVAEVYASDDAHEKFVRDFVHAWTKVMNLDRFDLKRS.

A signal peptide spans 1–28; that stretch reads MQKKRIGKSVVAALAIIAMSAGTVAAWA. Residues 107-228 constitute a cross-link (tryptophyl-tyrosyl-methioninium (Trp-Tyr) (with M-254)); it reads WHGAGTYRTY…LAATQMGLIY (122 aa). H108 functions as the Proton acceptor in the catalytic mechanism. Residues 228 to 254 constitute a cross-link (tryptophyl-tyrosyl-methioninium (Tyr-Met) (with W-107)); it reads YVNPEGPNGNPDPVAAAKDIREAFGRM. H269 is a binding site for heme b.

It belongs to the peroxidase family. Peroxidase/catalase subfamily. In terms of assembly, homodimer or homotetramer. Heme b is required as a cofactor. In terms of processing, formation of the three residue Trp-Tyr-Met cross-link is important for the catalase, but not the peroxidase activity of the enzyme.

The enzyme catalyses H2O2 + AH2 = A + 2 H2O. The catalysed reaction is 2 H2O2 = O2 + 2 H2O. Its function is as follows. Bifunctional enzyme with both catalase and broad-spectrum peroxidase activity. In Burkholderia ambifaria (strain MC40-6), this protein is Catalase-peroxidase 2.